The sequence spans 689 residues: MADLEAVLADVSYLMAMEKSKATPAARASKKILLPEPSIRSVMQKYLEDRGEVTFEKIFSQKLGYLLFRDFYLNHLEEAKPLVEFYEEIEKYEKLETEEERVVRSREIFDSYIMKELLACSHPFSKNATEHVQGHLVKKQVPPDLFQPYIEEICQNLRGDVFHKFIESDKFTRFCQWKNVELNIHLTMNDFSVHRIIGRGGFGEVYGCRKADTGKMYAMKCLDKKRIKMKQGETLALNERIMLSLVSTGDCPFIVCMSYAFHTPDKLSFILDLMNGGDLHYHLSQHGVFSEADMRFYAAEIILGLEHMHNRFVVYRDLKPANILLDEHGHVRISDLGLACDFSKKKPHASVGTHGYMAPEVLQKGVAYDSSADWFSLGCMLFKLLRGHSPFRQHKTKDKHEIDRMTLTMAVELPDSFSPELRSLLEGLLQRDVNRRLGCLGRGAQEIKESPFFRSLDWQMVFLQKYPPPLIPPRGEVNAADAFDIGSFDEEDTKGIKLLDSDQELYRNFPLTISERWQQEVAETVFDTINAETDRLEARKKAKNKQLGHEEDYALGKDCIMHGYMSKMGNPFLTQWQRRYFYLFPNRLEWRGEDEAPQSLLTMEEIQSVEETQIKERKCLLLKIRGGKQFVLQCDSDPELVQWKKELRDAYREAQQLVQRVPKMKNKPRSPVVELSKVPLIQRGSANGL.

The segment at 1-190 is N-terminal; the sequence is MADLEAVLAD…ELNIHLTMND (190 aa). Residues 54–175 form the RGS domain; it reads TFEKIFSQKL…IESDKFTRFC (122 aa). The Protein kinase domain occupies 191–453; it reads FSVHRIIGRG…AQEIKESPFF (263 aa). ATP is bound by residues 197 to 205 and lysine 220; that span reads IGRGGFGEV. Aspartate 317 functions as the Proton acceptor in the catalytic mechanism. In terms of domain architecture, AGC-kinase C-terminal spans 454–521; the sequence is RSLDWQMVFL…TISERWQQEV (68 aa). The PH domain occupies 558-652; it reads DCIMHGYMSK…WKKELRDAYR (95 aa). The residue at position 670 (serine 670) is a Phosphoserine.

The protein belongs to the protein kinase superfamily. AGC Ser/Thr protein kinase family. GPRK subfamily. In terms of assembly, interacts with the heterodimer formed by GNB1 and GNG2. Interacts with GIT1. Interacts with, and phosphorylates chemokine-stimulated CCR5. Interacts with ARRB1. Interacts with LPAR1 and LPAR2. Interacts with RALA in response to LPAR1 activation. ADRBK1 and RALA mutually inhibit each other's binding to LPAR1. Interacts with ADRB2. As to expression, expressed at low levels in brain cortex, hippocampus, striatum, hypothalamus, cerebellum and brainstem (at protein level).

It localises to the cytoplasm. The protein resides in the cell membrane. Its subcellular location is the postsynapse. It is found in the presynapse. It carries out the reaction [beta-adrenergic receptor] + ATP = [beta-adrenergic receptor]-phosphate + ADP + H(+). Its activity is regulated as follows. In contrast to other AGC family kinases, the catalytic activity is solely regulated by the binding of substrates and ligands, not by phosphorylation of the kinase domain. Specifically phosphorylates the agonist-occupied form of the beta-adrenergic and closely related receptors, probably inducing a desensitization of them. Key regulator of LPAR1 signaling. Competes with RALA for binding to LPAR1 thus affecting the signaling properties of the receptor. Desensitizes LPAR1 and LPAR2 in a phosphorylation-independent manner. Positively regulates ciliary smoothened (SMO)-dependent Hedgehog (Hh) signaling pathway by facilitating the trafficking of SMO into the cilium and the stimulation of SMO activity. Inhibits relaxation of airway smooth muscle in response to blue light. The chain is Beta-adrenergic receptor kinase 1 from Rattus norvegicus (Rat).